A 470-amino-acid polypeptide reads, in one-letter code: 6-phosphofructo-2-kinase/fructose-2,6-bisphosphatase (470 aa).

The segment at 1–249 is 6-phosphofructo-2-kinase; that stretch reads MADRLRELTQ…VYYLMNIHVT (249 aa). Ser31 bears the Phosphoserine; by PKA mark. 47–55 provides a ligand contact to ATP; that stretch reads GLPARGKTY. Residues Arg80 and Arg104 each coordinate beta-D-fructose 6-phosphate. Residue Asp130 is part of the active site. Residues Thr132 and Arg138 each coordinate beta-D-fructose 6-phosphate. Residue Cys160 is part of the active site. Position 169-174 (169-174) interacts with ATP; sequence NITQVK. Positions 174, 195, and 199 each coordinate beta-D-fructose 6-phosphate. Residues 250–470 form a fructose-2,6-bisphosphatase region; that stretch reads PRSIYLSRHG…EALDTVPEHF (221 aa). Arg257 provides a ligand contact to beta-D-fructose 2,6-bisphosphate. The active-site Tele-phosphohistidine intermediate is the His258. Beta-D-fructose 2,6-bisphosphate-binding residues include Asn264 and Gly270. Glu327 functions as the Proton donor/acceptor in the catalytic mechanism. Beta-D-fructose 2,6-bisphosphate contacts are provided by Tyr338, Arg352, Lys356, Tyr367, Gln393, and Arg397. Position 349–352 (349–352) interacts with ATP; the sequence is FALR. ATP is bound by residues 393–397 and Tyr429; that span reads QAVMR.

In the C-terminal section; belongs to the phosphoglycerate mutase family. Homodimer.

It catalyses the reaction beta-D-fructose 2,6-bisphosphate + H2O = beta-D-fructose 6-phosphate + phosphate. It carries out the reaction beta-D-fructose 6-phosphate + ATP = beta-D-fructose 2,6-bisphosphate + ADP + H(+). Phosphorylation results in inhibition of the kinase activity. Functionally, synthesis and degradation of fructose 2,6-bisphosphate. The chain is 6-phosphofructo-2-kinase/fructose-2,6-bisphosphatase from Aquarana catesbeiana (American bullfrog).